The sequence spans 155 residues: Endoribonuclease YbeY (155 aa).

Zn(2+) contacts are provided by H114, H118, and H124.

It belongs to the endoribonuclease YbeY family. Zn(2+) is required as a cofactor.

The protein resides in the cytoplasm. Single strand-specific metallo-endoribonuclease involved in late-stage 70S ribosome quality control and in maturation of the 3' terminus of the 16S rRNA. In Erwinia tasmaniensis (strain DSM 17950 / CFBP 7177 / CIP 109463 / NCPPB 4357 / Et1/99), this protein is Endoribonuclease YbeY.